The sequence spans 476 residues: Abscisic acid 8'-hydroxylase CYP707A1 (476 aa).

The chain crosses the membrane as a helical span at residues 5-25; sequence FEIFLYISMFVLGYLSYYFCF. C422 provides a ligand contact to heme.

It belongs to the cytochrome P450 family. The cofactor is heme. Expressed in ovaries (specifically in ovules and placenta), sepals, petals and pedicels.

Its subcellular location is the membrane. The enzyme catalyses 2-cis-(+)-abscisate + reduced [NADPH--hemoprotein reductase] + O2 = (+)-8'-hydroxyabscisate + oxidized [NADPH--hemoprotein reductase] + H2O + H(+). Its pathway is plant hormone degradation; abscisic acid degradation. In terms of biological role, involved in the oxidative degradation of abscisic acid, especially in pollinated ovaries. The sequence is that of Abscisic acid 8'-hydroxylase CYP707A1 from Solanum lycopersicum (Tomato).